A 28-amino-acid chain; its full sequence is N-acetyl-D-galactosamine-binding lectin subunit A (28 aa).

This sequence belongs to the ribosome-inactivating protein family. Disulfide-linked heterodimer of A and B chains.

The enzyme catalyses Endohydrolysis of the N-glycosidic bond at one specific adenosine on the 28S rRNA.. Its function is as follows. Gal / GalNAc-specific lectin. Agglutinates both native and trypsin-treated rabbit erythrocytes but not human erythrocytes irrespective of blood group type. This chain is N-acetyl-D-galactosamine-binding lectin subunit A, found in Iris hollandica (Dutch iris).